A 439-amino-acid polypeptide reads, in one-letter code: Homogentisate 1,2-dioxygenase (439 aa).

His293 serves as the catalytic Proton acceptor. Fe cation-binding residues include His336 and Glu342. 2 residues coordinate homogentisate: Tyr351 and His372. His372 contributes to the Fe cation binding site.

This sequence belongs to the homogentisate dioxygenase family. In terms of assembly, hexamer; dimer of trimers. It depends on Fe cation as a cofactor.

The enzyme catalyses homogentisate + O2 = 4-maleylacetoacetate + H(+). It functions in the pathway amino-acid degradation; L-phenylalanine degradation; acetoacetate and fumarate from L-phenylalanine: step 4/6. In terms of biological role, involved in the catabolism of homogentisate (2,5-dihydroxyphenylacetate or 2,5-OH-PhAc), a central intermediate in the degradation of phenylalanine and tyrosine. Catalyzes the oxidative ring cleavage of the aromatic ring of homogentisate to yield maleylacetoacetate. In Cupriavidus pinatubonensis (strain JMP 134 / LMG 1197) (Cupriavidus necator (strain JMP 134)), this protein is Homogentisate 1,2-dioxygenase.